The chain runs to 148 residues: D-aminoacyl-tRNA deacylase (148 aa).

The Gly-cisPro motif, important for rejection of L-amino acids signature appears at 137–138; it reads GP.

This sequence belongs to the DTD family. In terms of assembly, homodimer.

It is found in the cytoplasm. It catalyses the reaction glycyl-tRNA(Ala) + H2O = tRNA(Ala) + glycine + H(+). The catalysed reaction is a D-aminoacyl-tRNA + H2O = a tRNA + a D-alpha-amino acid + H(+). Functionally, an aminoacyl-tRNA editing enzyme that deacylates mischarged D-aminoacyl-tRNAs. Also deacylates mischarged glycyl-tRNA(Ala), protecting cells against glycine mischarging by AlaRS. Acts via tRNA-based rather than protein-based catalysis; rejects L-amino acids rather than detecting D-amino acids in the active site. By recycling D-aminoacyl-tRNA to D-amino acids and free tRNA molecules, this enzyme counteracts the toxicity associated with the formation of D-aminoacyl-tRNA entities in vivo and helps enforce protein L-homochirality. The protein is D-aminoacyl-tRNA deacylase of Finegoldia magna (strain ATCC 29328 / DSM 20472 / WAL 2508) (Peptostreptococcus magnus).